The sequence spans 133 residues: ATP synthase epsilon chain, chloroplastic (133 aa).

The protein belongs to the ATPase epsilon chain family. In terms of assembly, F-type ATPases have 2 components, CF(1) - the catalytic core - and CF(0) - the membrane proton channel. CF(1) has five subunits: alpha(3), beta(3), gamma(1), delta(1), epsilon(1). CF(0) has three main subunits: a, b and c.

It localises to the plastid. Its subcellular location is the chloroplast thylakoid membrane. Its function is as follows. Produces ATP from ADP in the presence of a proton gradient across the membrane. The chain is ATP synthase epsilon chain, chloroplastic from Zygnema circumcarinatum (Green alga).